A 290-amino-acid chain; its full sequence is NAD kinase (290 aa).

Catalysis depends on D73, which acts as the Proton acceptor. Residues 73–74, 147–148, R158, R175, D177, 188–193, and Q246 contribute to the NAD(+) site; these read DG, ND, and TAYALS.

It belongs to the NAD kinase family. A divalent metal cation serves as cofactor.

Its subcellular location is the cytoplasm. The enzyme catalyses NAD(+) + ATP = ADP + NADP(+) + H(+). Its function is as follows. Involved in the regulation of the intracellular balance of NAD and NADP, and is a key enzyme in the biosynthesis of NADP. Catalyzes specifically the phosphorylation on 2'-hydroxyl of the adenosine moiety of NAD to yield NADP. The polypeptide is NAD kinase (Thiobacillus denitrificans (strain ATCC 25259 / T1)).